The sequence spans 411 residues: Elongation factor 1-gamma (411 aa).

Residues 3–84 enclose the GST N-terminal domain; sequence LTLWSGVNPE…HIARLDRSGG (82 aa). The region spanning 90–216 is the GST C-terminal domain; the sequence is TPLEGSQVDM…QGATFGAREG (127 aa). Positions 212-265 are disordered; that stretch reads GAREGGAKGQGRGCARPGREEAERAAAAADGAEEEDEAPREKKKPNPLDELPPS. Over residues 214-223 the composition is skewed to gly residues; the sequence is REGGAKGQGR. Residues 255 to 411 enclose the EF-1-gamma C-terminal domain; sequence KPNPLDELPP…RPVLEGRVFK (157 aa).

In terms of assembly, EF-1 is composed of four subunits: alpha, beta, delta, and gamma.

In terms of biological role, probably plays a role in anchoring the complex to other cellular components. This chain is Elongation factor 1-gamma, found in Trypanosoma cruzi.